The primary structure comprises 302 residues: Gap junction delta-2 protein (302 aa).

At 1-19 (MGEWTILERLLEAAVQQHS) the chain is on the cytoplasmic side. A helical transmembrane segment spans residues 20–42 (TMIGRILLTVVVIFRILVVAIVG). The Extracellular portion of the chain corresponds to 43–75 (ETVYDDEQTMFVCNTLQPGCNQACYDKAFPISH). Residues 76–98 (IRYWVFQIIMVCTPSLCFITYSV) form a helical membrane-spanning segment. The Cytoplasmic portion of the chain corresponds to 99-177 (HQSSKQRERQ…KIRRQEGISR (79 aa)). Residues 178 to 200 (FYIIQVVFRNALEIGFLMGQYFL) traverse the membrane as a helical segment. Residues 201–232 (YGFKVPSMYECNRYPCVKMVECYVSRPTEKTV) are Extracellular-facing. Residues 233-255 (FLVFMFAVSGLCVILNLAELNHL) traverse the membrane as a helical segment. Residues 256–302 (GWRKIKTAVRGAQERRKSIYEIRNKDSPHRIGVPNFGRTQSSDSAYV) lie on the Cytoplasmic side of the membrane.

The protein belongs to the connexin family. Delta-type subfamily. In terms of assembly, a connexon is composed of a hexamer of connexins. In terms of tissue distribution, retinal specific.

The protein localises to the cell membrane. It localises to the cell junction. The protein resides in the gap junction. One gap junction consists of a cluster of closely packed pairs of transmembrane channels, the connexons, through which materials of low MW diffuse from one cell to a neighboring cell. This chain is Gap junction delta-2 protein, found in Leucoraja erinaceus (Little skate).